Here is a 245-residue protein sequence, read N- to C-terminus: Extracellular protein ARB_04177 (245 aa).

The protein localises to the secreted. In Arthroderma benhamiae (strain ATCC MYA-4681 / CBS 112371) (Trichophyton mentagrophytes), this protein is Extracellular protein ARB_04177.